Reading from the N-terminus, the 492-residue chain is 3-octaprenyl-4-hydroxybenzoate carboxy-lyase (492 aa).

Residue N175 participates in Mn(2+) binding. Residues 178-180 (IYR), 192-194 (RWL), and 197-198 (RG) each bind prenylated FMN. E241 is a Mn(2+) binding site. D290 (proton donor) is an active-site residue.

Belongs to the UbiD family. In terms of assembly, homohexamer. Prenylated FMN is required as a cofactor. Requires Mn(2+) as cofactor.

The protein localises to the cell membrane. It catalyses the reaction a 4-hydroxy-3-(all-trans-polyprenyl)benzoate + H(+) = a 2-(all-trans-polyprenyl)phenol + CO2. It functions in the pathway cofactor biosynthesis; ubiquinone biosynthesis. Catalyzes the decarboxylation of 3-octaprenyl-4-hydroxy benzoate to 2-octaprenylphenol, an intermediate step in ubiquinone biosynthesis. In Salmonella choleraesuis (strain SC-B67), this protein is 3-octaprenyl-4-hydroxybenzoate carboxy-lyase.